Here is a 229-residue protein sequence, read N- to C-terminus: Large ribosomal subunit protein uL1 (229 aa).

The protein belongs to the universal ribosomal protein uL1 family. In terms of assembly, part of the 50S ribosomal subunit.

In terms of biological role, binds directly to 23S rRNA. The L1 stalk is quite mobile in the ribosome, and is involved in E site tRNA release. Its function is as follows. Protein L1 is also a translational repressor protein, it controls the translation of the L11 operon by binding to its mRNA. This chain is Large ribosomal subunit protein uL1, found in Streptococcus pneumoniae serotype 2 (strain D39 / NCTC 7466).